A 375-amino-acid polypeptide reads, in one-letter code: Phytanoyl-CoA hydroxylase-interacting protein-like (375 aa).

Residues S11, S12, and S15 each carry the phosphoserine modification. N22 carries an N-linked (GlcNAc...) asparagine glycan. The residue at position 24 (S24) is a Phosphoserine. A glycan (N-linked (GlcNAc...) asparagine) is linked at N36. In terms of domain architecture, Fibronectin type-III spans 51–160; it reads VPHNIKINNI…EIIEFCTADY (110 aa).

Belongs to the PHYHIP family.

Functionally, may play a role in the development of the central system. The protein is Phytanoyl-CoA hydroxylase-interacting protein-like (Phyhipl) of Rattus norvegicus (Rat).